The sequence spans 285 residues: MIVCKTPEEVLDQVRLWKAQGKRIGFVPTMGYLHEGHASLFEECISKADKTVVSIFVNPAQFNDPEDYAKYPVNTEGDLKLCESKKVDLVFLPNKETIYPDGIPDIVLKIPNLMKSLCAVSRPGHFEGVLLVIFRLFHFVQPDFAFFGKKDYQQYLLIREFCNTLAFPIEVIGCETVRSSQGLALSSRNSRLSETEKEESLLIYRSLKLGENQIFSGIKNPLLVKEIMKDVLDSSSKIRLDYLEILNADTLDPLEVLEGEILLAIAAFIGPVRLIDNLTLSVPTS.

An ATP-binding site is contributed by 30-37 (MGYLHEGH). His37 functions as the Proton donor in the catalytic mechanism. Gln61 lines the (R)-pantoate pocket. Beta-alanine is bound at residue Gln61. 148 to 151 (GKKD) contacts ATP. Residue Gln154 coordinates (R)-pantoate. ATP is bound by residues Val177 and 185–188 (LSSR).

The protein belongs to the pantothenate synthetase family. In terms of assembly, homodimer.

The protein resides in the cytoplasm. It carries out the reaction (R)-pantoate + beta-alanine + ATP = (R)-pantothenate + AMP + diphosphate + H(+). Its pathway is cofactor biosynthesis; (R)-pantothenate biosynthesis; (R)-pantothenate from (R)-pantoate and beta-alanine: step 1/1. Its function is as follows. Catalyzes the condensation of pantoate with beta-alanine in an ATP-dependent reaction via a pantoyl-adenylate intermediate. In Leptospira interrogans serogroup Icterohaemorrhagiae serovar Lai (strain 56601), this protein is Pantothenate synthetase.